Reading from the N-terminus, the 326-residue chain is Homocysteine S-methyltransferase 1 (326 aa).

Residues 9-323 (LLEDLIKKCG…STINAISRDL (315 aa)) form the Hcy-binding domain. The Zn(2+) site is built by C241, C308, and C309.

Monomer. The cofactor is Zn(2+). In terms of tissue distribution, expressed predominantly in roots. Expressed in rosette leaves, cauline leaves and developing seeds.

It catalyses the reaction S-methyl-L-methionine + L-homocysteine = 2 L-methionine + H(+). Its activity is regulated as follows. Strongly inhibited by methionine. Catalyzes methyl transfer from S-methylmethionine (SMM) to adenosyl-L-homocysteine (AdoMet). SMM degradation (by HMT-1, HMT-2 and HMT-3) and biosynthesis (by MMT1) constitute the SMM cycle in plants, which is probably required to achieve short term control of AdoMet level. The protein is Homocysteine S-methyltransferase 1 (HMT-1) of Arabidopsis thaliana (Mouse-ear cress).